The sequence spans 216 residues: UPF0134 protein MPN_344 (216 aa).

Over residues 47–62 the composition is skewed to basic and acidic residues; the sequence is FTIIEDQQDRPDKPEE. 2 disordered regions span residues 47 to 104 and 194 to 216; these read FTII…PKPD and GKMD…LESK. The segment covering 68 to 78 has biased composition (pro residues); the sequence is IPKPPKPPKGP. Residues 83 to 93 show a composition bias toward low complexity; the sequence is EPGQPGGPDDP.

It belongs to the UPF0134 family.

The polypeptide is UPF0134 protein MPN_344 (Mycoplasma pneumoniae (strain ATCC 29342 / M129 / Subtype 1) (Mycoplasmoides pneumoniae)).